The sequence spans 299 residues: Ribosomal RNA small subunit methyltransferase A (299 aa).

The S-adenosyl-L-methionine site is built by asparagine 44, valine 46, glycine 71, glutamate 92, aspartate 122, and asparagine 141.

This sequence belongs to the class I-like SAM-binding methyltransferase superfamily. rRNA adenine N(6)-methyltransferase family. RsmA subfamily.

The protein resides in the cytoplasm. The enzyme catalyses adenosine(1518)/adenosine(1519) in 16S rRNA + 4 S-adenosyl-L-methionine = N(6)-dimethyladenosine(1518)/N(6)-dimethyladenosine(1519) in 16S rRNA + 4 S-adenosyl-L-homocysteine + 4 H(+). Its function is as follows. Specifically dimethylates two adjacent adenosines (A1518 and A1519) in the loop of a conserved hairpin near the 3'-end of 16S rRNA in the 30S particle. May play a critical role in biogenesis of 30S subunits. This chain is Ribosomal RNA small subunit methyltransferase A, found in Rhodococcus erythropolis (strain PR4 / NBRC 100887).